A 106-amino-acid polypeptide reads, in one-letter code: Small ribosomal subunit protein uS10 (106 aa).

The protein belongs to the universal ribosomal protein uS10 family. Part of the 30S ribosomal subunit.

In terms of biological role, involved in the binding of tRNA to the ribosomes. This Pyrobaculum islandicum (strain DSM 4184 / JCM 9189 / GEO3) protein is Small ribosomal subunit protein uS10.